Consider the following 825-residue polypeptide: IQ and AAA domain-containing protein 1-like (825 aa).

The IQ domain maps to 206-235; it reads RDQGAIVIQKVWKGYLQRKRIEQDRRVEME. Basic and acidic residues predominate over residues 344–366; that stretch reads QAQESRKKDQEKKEKNKEKEKEK. 2 disordered regions span residues 344-378 and 459-487; these read QAQE…KEEK and DREE…KDLT. Over residues 467-482 the composition is skewed to basic residues; that stretch reads KSPKKKGGKKSGKKKK. 572-579 contacts ATP; sequence GPSGMGKK.

This sequence belongs to the AAA ATPase family.

In Mus musculus (Mouse), this protein is IQ and AAA domain-containing protein 1-like (Iqca1l).